Here is a 74-residue protein sequence, read N- to C-terminus: Pelophylaxin-3 (74 aa).

A signal peptide spans M1–C22. The propeptide occupies E23–V39. C68 and C74 are oxidised to a cystine.

In terms of tissue distribution, expressed by the skin glands.

The protein resides in the secreted. Its function is as follows. Antimicrobial peptide. In Pelophylax fukienensis (Fukien gold-striped pond frog), this protein is Pelophylaxin-3.